Reading from the N-terminus, the 66-residue chain is MAICYARFMVPEPSIFEIDAEAEEAADAEGMADIAAGRVVPHEEVSAWLDTWGTPEEKPAPETWRK.

Its function is as follows. Antitoxin component of a type II toxin-antitoxin (TA) system. Neutralizes the effect of cognate toxin RelE2, but no other RelE or ParE toxin. This Caulobacter vibrioides (strain ATCC 19089 / CIP 103742 / CB 15) (Caulobacter crescentus) protein is Antitoxin RelB2 (relB2).